Consider the following 150-residue polypeptide: Troponin C, isoform 1 (150 aa).

Met-1 carries the N-acetylmethionine modification. EF-hand domains follow at residues 7-42 (DQVQALQKAFNSFDTDDKGFITPDTVGVILRMMGVK), 43-78 (ISDRHLQEVISETDEDGSGEIEFEEFAALAAKFLSE), 83-118 (ALKKELKEAFRIYDRGGNGYITVHTLKEILRELDNK), and 119-150 (LTEDNLDSIIEEVDEDGSGTIDFNEFMKMMNG). Asp-56, Asp-58, Ser-60, Glu-62, and Glu-67 together coordinate Ca(2+). Ca(2+) contacts are provided by Asp-132, Asp-134, Ser-136, Thr-138, and Glu-143.

Belongs to the troponin C family.

In terms of biological role, troponin is the central regulatory protein of striated muscle contraction. Tn consists of three components: Tn-I which is the inhibitor of actomyosin ATPase, Tn-T which contains the binding site for tropomyosin and Tn-C. The binding of calcium to Tn-C abolishes the inhibitory action of Tn on actin filaments. The sequence is that of Troponin C, isoform 1 from Homarus americanus (American lobster).